Here is an 803-residue protein sequence, read N- to C-terminus: Phenylalanine--tRNA ligase beta subunit (803 aa).

In terms of domain architecture, tRNA-binding spans 39-150 (AKVLAPFTIA…ADAPVGAAYA (112 aa)). Positions 400–475 (ADDKIIDFPL…RIVGVDKVPL (76 aa)) constitute a B5 domain. Mg(2+) contacts are provided by Asp-453, Asp-459, Glu-462, and Glu-463. The 94-residue stretch at 709–802 (SAFHPVSRDF…VTKKTGGSLR (94 aa)) folds into the FDX-ACB domain.

Belongs to the phenylalanyl-tRNA synthetase beta subunit family. Type 1 subfamily. As to quaternary structure, tetramer of two alpha and two beta subunits. Requires Mg(2+) as cofactor.

It is found in the cytoplasm. The enzyme catalyses tRNA(Phe) + L-phenylalanine + ATP = L-phenylalanyl-tRNA(Phe) + AMP + diphosphate + H(+). The chain is Phenylalanine--tRNA ligase beta subunit from Rhodopseudomonas palustris (strain ATCC BAA-98 / CGA009).